The following is a 78-amino-acid chain: Apolipoprotein C-I (78 aa).

The signal sequence occupies residues 1–26 (MRLILWLPVLVVVLLMVTEGPAPAQG).

It belongs to the apolipoprotein C1 family.

Its subcellular location is the secreted. In terms of biological role, inhibitor of lipoprotein binding to the low density lipoprotein (LDL) receptor, LDL receptor-related protein, and very low density lipoprotein (VLDL) receptor. Associates with high density lipoproteins (HDL) and the triacylglycerol-rich lipoproteins in the plasma and makes up about 10% of the protein of the VLDL and 2% of that of HDL. Appears to interfere directly with fatty acid uptake and is also the major plasma inhibitor of cholesteryl ester transfer protein (CETP). Binds free fatty acids and reduces their intracellular esterification. Modulates the interaction of APOE with beta-migrating VLDL and inhibits binding of beta-VLDL to the LDL receptor-related protein. The sequence is that of Apolipoprotein C-I (APOC1) from Panthera tigris altaica (Siberian tiger).